The chain runs to 203 residues: Cytochrome c oxidase assembly protein CtaG (203 aa).

Residues 1 to 19 (MDAGKAERRAGNGRRTDGR) are Cytoplasmic-facing. The chain crosses the membrane as a helical; Signal-anchor for type II membrane protein span at residues 20–42 (RHLVVAAACAAFIAAMVGVTYAS). Topologically, residues 43 to 203 (VPLYAMFCAL…AAARASGTGG (161 aa)) are periplasmic.

Belongs to the COX11/CtaG family.

The protein localises to the cell inner membrane. Its function is as follows. Exerts its effect at some terminal stage of cytochrome c oxidase synthesis, probably by being involved in the insertion of the copper B into subunit I. The polypeptide is Cytochrome c oxidase assembly protein CtaG (Xanthobacter autotrophicus (strain ATCC BAA-1158 / Py2)).